The following is a 474-amino-acid chain: Glutathione synthetase (474 aa).

A2 is modified (N-acetylalanine). Substrate is bound at residue R125. E144 is a binding site for ATP. Mg(2+)-binding residues include E144 and N146. Substrate is bound by residues 148–151 (VSAS), 214–216 (ERN), Q220, and 267–270 (RDGY). Residues K305, 364–373 (KPQREGGGNN), Y375, and 398–401 (MEKI) contribute to the ATP site. Residue E368 participates in Mg(2+) binding. S415 is subject to Phosphoserine. Position 425 (E425) interacts with ATP. R450 provides a ligand contact to substrate. ATP-binding residues include K452 and D458. Residue 461-462 (VA) participates in substrate binding.

It belongs to the eukaryotic GSH synthase family. As to quaternary structure, homodimer. Mg(2+) serves as cofactor.

The catalysed reaction is gamma-L-glutamyl-L-cysteine + glycine + ATP = glutathione + ADP + phosphate + H(+). It carries out the reaction gamma-L-glutamyl-(2S)-2-aminobutanoate + glycine + ATP = ophthalmate + ADP + phosphate + H(+). It functions in the pathway sulfur metabolism; glutathione biosynthesis; glutathione from L-cysteine and L-glutamate: step 2/2. Catalyzes the production of glutathione from gamma-glutamylcysteine and glycine in an ATP-dependent manner. Glutathione (gamma-glutamylcysteinylglycine, GSH) is the most abundant intracellular thiol in living aerobic cells and is required for numerous processes including the protection of cells against oxidative damage, amino acid transport, the detoxification of foreign compounds, the maintenance of protein sulfhydryl groups in a reduced state and acts as a cofactor for a number of enzymes. Participates in ophthalmate biosynthesis in hepatocytes. The chain is Glutathione synthetase from Bos taurus (Bovine).